Consider the following 389-residue polypeptide: Acetylornithine deacetylase (389 aa).

Histidine 85 contacts Zn(2+). The active site involves aspartate 87. Residue aspartate 117 coordinates Zn(2+). The active site involves glutamate 149. Zn(2+) contacts are provided by glutamate 150, glutamate 174, and histidine 360.

This sequence belongs to the peptidase M20A family. ArgE subfamily. As to quaternary structure, homodimer. Zn(2+) serves as cofactor. Requires Co(2+) as cofactor. Glutathione is required as a cofactor.

The protein resides in the cytoplasm. It carries out the reaction N(2)-acetyl-L-ornithine + H2O = L-ornithine + acetate. The protein operates within amino-acid biosynthesis; L-arginine biosynthesis; L-ornithine from N(2)-acetyl-L-ornithine (linear): step 1/1. Its function is as follows. Catalyzes the hydrolysis of the amide bond of N(2)-acetylated L-amino acids. Cleaves the acetyl group from N-acetyl-L-ornithine to form L-ornithine, an intermediate in L-arginine biosynthesis pathway, and a branchpoint in the synthesis of polyamines. This Yersinia pseudotuberculosis serotype O:1b (strain IP 31758) protein is Acetylornithine deacetylase.